A 254-amino-acid chain; its full sequence is 5'-nucleotidase SurE (254 aa).

A divalent metal cation contacts are provided by Asp8, Asp9, Ser38, and Asn91.

The protein belongs to the SurE nucleotidase family. A divalent metal cation is required as a cofactor.

Its subcellular location is the cytoplasm. The catalysed reaction is a ribonucleoside 5'-phosphate + H2O = a ribonucleoside + phosphate. Its function is as follows. Nucleotidase that shows phosphatase activity on nucleoside 5'-monophosphates. This is 5'-nucleotidase SurE from Anaeromyxobacter sp. (strain Fw109-5).